Consider the following 284-residue polypeptide: uncharacterized protein (284 aa).

2 stretches are compositionally biased toward low complexity: residues 110–123 (NGPR…PNNG) and 130–149 (NGPM…NGPN). Residues 110–176 (NGPRGRQMNG…PNEFDSDDDD (67 aa)) are disordered.

The protein resides in the virion. This is an uncharacterized protein from Acanthamoeba polyphaga mimivirus (APMV).